Consider the following 778-residue polypeptide: Endonuclease MutS2 (778 aa).

An ATP-binding site is contributed by 328–335 (GPNTGGKT). One can recognise a Smr domain in the interval 703 to 778 (LDLRGKRYEE…GSGCTIANLG (76 aa)).

Belongs to the DNA mismatch repair MutS family. MutS2 subfamily. As to quaternary structure, homodimer. Binds to stalled ribosomes, contacting rRNA.

In terms of biological role, endonuclease that is involved in the suppression of homologous recombination and thus may have a key role in the control of bacterial genetic diversity. Its function is as follows. Acts as a ribosome collision sensor, splitting the ribosome into its 2 subunits. Detects stalled/collided 70S ribosomes which it binds and splits by an ATP-hydrolysis driven conformational change. Acts upstream of the ribosome quality control system (RQC), a ribosome-associated complex that mediates the extraction of incompletely synthesized nascent chains from stalled ribosomes and their subsequent degradation. Probably generates substrates for RQC. In Streptococcus equi subsp. zooepidemicus (strain H70), this protein is Endonuclease MutS2.